The sequence spans 72 residues: Translation initiation factor IF-1 (72 aa).

The 72-residue stretch at 1–72 (MSKDDVIEMQ…TRGRITWRAK (72 aa)) folds into the S1-like domain.

The protein belongs to the IF-1 family. As to quaternary structure, component of the 30S ribosomal translation pre-initiation complex which assembles on the 30S ribosome in the order IF-2 and IF-3, IF-1 and N-formylmethionyl-tRNA(fMet); mRNA recruitment can occur at any time during PIC assembly.

It localises to the cytoplasm. Functionally, one of the essential components for the initiation of protein synthesis. Stabilizes the binding of IF-2 and IF-3 on the 30S subunit to which N-formylmethionyl-tRNA(fMet) subsequently binds. Helps modulate mRNA selection, yielding the 30S pre-initiation complex (PIC). Upon addition of the 50S ribosomal subunit IF-1, IF-2 and IF-3 are released leaving the mature 70S translation initiation complex. This is Translation initiation factor IF-1 from Clostridium kluyveri (strain ATCC 8527 / DSM 555 / NBRC 12016 / NCIMB 10680 / K1).